The primary structure comprises 578 residues: GRAM domain-containing protein 4 (578 aa).

A coiled-coil region spans residues 83-135; the sequence is HLEIALLEKHFLQEELRKLREETNIDTLKQELEKERQRRTELEQKITDIAKTR. The segment at 132–157 is disordered; that stretch reads AKTRTDESATQQLSKGPSQTNGADKQ. Positions 139–154 are enriched in polar residues; the sequence is SATQQLSKGPSQTNGA. A run of 3 helical transmembrane segments spans residues 236 to 256, 334 to 354, and 356 to 376; these read IAFI…MFLF, MTQK…FFHY, and TIGL…DFIF. In terms of domain architecture, GRAM spans 446–524; it reads SSFHEIFSLL…TDITDIQKYK (79 aa).

The protein resides in the mitochondrion membrane. The protein localises to the endoplasmic reticulum membrane. Its function is as follows. Plays a role as a mediator of e2f1-induced apoptosis in the absence of p53/TP53. This chain is GRAM domain-containing protein 4 (gramd4), found in Xenopus laevis (African clawed frog).